The sequence spans 521 residues: MDFLTLAGQLNAGVILPEGIVIVTLLTVLVTDLILGRQSLRLTPALAITGLSAAIAVLTLQWNTSQNLAFLGGFNGDNLSIVFRGIVLLSAAVTILLSIRYVEQSGTSLGEFITILLTASLGGMFLSGANELVTIFVSLETLSISSYLLTGYMKRDPRSNEAALKYLLIGAASSAIFLYGVSLLYGLAGGETQLPAIAEKLGEAQPLALLISLIFVIAGIAFKISAVPFHQWTPDVYEGSPTPIVAFLSVGSKAAGFALAIRLLVTAYPALTEQWHFVFTALAILSLVLGNVVALAQTSMKRLLAYSSIAQAGFVMIGLIAGTEAGYSSMVYYLLIYLFMNLGGFACVILFSLRTGTDQISEYAGLYQKDPLVTLGLSLCLLSLGGIPPLAGFFGKLYLFWAGWQAGLYGLVLLALITSVISIYYYIRVIKMMVVKEPQEMSESVRNYPETNWNLPGMQPLRAGLVVCVIATAVAGILSNPLFNLASASVSGSSFLGLAPAAEVVTTTATPVALSEPPAAS.

A run of 14 helical transmembrane segments spans residues 14 to 34 (VILP…TDLI), 42 to 62 (LTPA…TLQW), 79 to 99 (LSIV…LLSI), 109 to 129 (LGEF…LSGA), 132 to 152 (LVTI…LTGY), 167 to 187 (LLIG…LYGL), 207 to 227 (LALL…ISAV), 241 to 261 (PTPI…ALAI), 275 to 295 (WHFV…VVAL), 303 to 323 (LLAY…IAGT), 331 to 351 (VYYL…VILF), 375 to 395 (LGLS…GFFG), 397 to 417 (LYLF…LALI), and 463 to 483 (AGLV…NPLF).

The protein belongs to the complex I subunit 2 family. NDH-1 can be composed of about 15 different subunits; different subcomplexes with different compositions have been identified which probably have different functions.

It is found in the cellular thylakoid membrane. It carries out the reaction a plastoquinone + NADH + (n+1) H(+)(in) = a plastoquinol + NAD(+) + n H(+)(out). The catalysed reaction is a plastoquinone + NADPH + (n+1) H(+)(in) = a plastoquinol + NADP(+) + n H(+)(out). In terms of biological role, NDH-1 shuttles electrons from an unknown electron donor, via FMN and iron-sulfur (Fe-S) centers, to quinones in the respiratory and/or the photosynthetic chain. The immediate electron acceptor for the enzyme in this species is believed to be plastoquinone. Couples the redox reaction to proton translocation, and thus conserves the redox energy in a proton gradient. Cyanobacterial NDH-1 also plays a role in inorganic carbon-concentration. This chain is NAD(P)H-quinone oxidoreductase subunit 2, found in Synechococcus elongatus (strain ATCC 33912 / PCC 7942 / FACHB-805) (Anacystis nidulans R2).